Consider the following 471-residue polypeptide: Alpha-galactosidase 1 (471 aa).

The N-terminal stretch at 1-18 (MFAFYFLTACISLKGVFG) is a signal peptide. C42 and C74 form a disulfide bridge. D72 and D73 together coordinate substrate. N-linked (GlcNAc...) asparagine glycosylation is present at N105. An intrachain disulfide couples C121 to C151. K147 is a substrate binding site. D149 serves as the catalytic Nucleophile. N-linked (GlcNAc...) asparagine glycosylation occurs at N175. R205 contacts substrate. The active-site Proton donor is the D209. 2 disulfide bridges follow: C221–C237 and C223–C230. A substrate-binding site is contributed by Q251. N-linked (GlcNAc...) asparagine glycosylation is found at N270, N370, N403, N413, N422, N435, and N454.

The protein belongs to the glycosyl hydrolase 27 family. Homotetramer.

It localises to the secreted. The catalysed reaction is Hydrolysis of terminal, non-reducing alpha-D-galactose residues in alpha-D-galactosides, including galactose oligosaccharides, galactomannans and galactolipids.. This is Alpha-galactosidase 1 (MEL1) from Saccharomyces cerevisiae (Baker's yeast).